The sequence spans 312 residues: Short chain dehydrogenase pgmD (312 aa).

NADP(+) contacts are provided by valine 46, isoleucine 47, lysine 171, tyrosine 207, lysine 211, and threonine 242. Tyrosine 207 functions as the Proton donor in the catalytic mechanism. Residue lysine 211 is the Lowers pKa of active site Tyr of the active site.

Belongs to the short-chain dehydrogenases/reductases (SDR) family.

It participates in pigment biosynthesis. It functions in the pathway secondary metabolite biosynthesis. Short chain dehydrogenase; part of the gene cluster that mediates the biosynthesis of pleosporalin A, ascomycone A, as well as a third cryptic naphthoquinone derived pigment, all responsible for the coloration of conidia. Essential for the production of pleosporalin A, but not the 2 other final products. The pathway begins with the biosynthesis of the cyclized heptaketide 3-acetonyl-1,6,8-trihydroxy-2-naphthaldehyde by the NR-PKS pgmA. The C-6 hydroxyl group is further methylated by the O-methyltransferase pgmB to yield fusarubinaldehyde which is in turn oxidized by the cytochrome P450 monooxygenase pgmC at C-9. The C-1 hydroxyl group is then methylated spontaneously. Although pgmE, pgmD and pgmH are essential for the production of pleosporalin A, it is not the case for the 2 other final products and it remains difficult to assign a specific function to each enzyme. PgmF and pgmG seem not to be involved in pigment biosynthesis although they were regulated by the cluster-specific transcription factor pgmR. The sequence is that of Short chain dehydrogenase pgmD from Aspergillus terreus.